Here is a 569-residue protein sequence, read N- to C-terminus: WD repeat-containing protein 20 (569 aa).

Position 2 is an N-acetylalanine (Ala2). 7 WD repeats span residues 94–138 (RIYK…KETS), 139–210 (KLFN…KSTR), 211–252 (NPLL…FDSV), 253–331 (ELHG…SGSD), 332–426 (EDFQ…NSVP), 427–523 (PPLP…VPLL), and 524–559 (EPLICKKIAHERLTVLIFLEDCIVTACQEGFICTWG). Ser357 and Ser360 each carry phosphoserine. Polar residues-rich tracts occupy residues 405–423 (NATSPPAGSNGNSVTTPGN) and 431–445 (RSNSLPHSAVSNAGS). Positions 405 to 445 (NATSPPAGSNGNSVTTPGNSVPPPLPRSNSLPHSAVSNAGS) are disordered. Residues Ser432, Ser434, and Ser465 each carry the phosphoserine modification. Residues 450 to 468 (MDGAIASGVSKFATLSLHD) form a mediates XPO1-dependent nuclear export of WDR20-USP12 complexes region.

As to quaternary structure, interacts with USP12; promotes translocation of USP12/WDR20 to the plasma membrane. Component of the USP12/WDR20/WDR48 deubiquitinating complex. Interacts with USP46; contributes to the cytoplasmic localization of the USP46/WDR20 complex. Component of the USP12/DMWD/WDR48 deubiquitinating complex.

It localises to the cytoplasm. The protein resides in the nucleus. Its function is as follows. Regulator of deubiquitinating complexes. Activates deubiquitinating activity of complexes containing USP12. Anchors at the base of the ubiquitin-contacting loop of USP12 and remotely modulates the catalytic center of the enzyme. Regulates shuttling of the USP12 deubiquitinase complex between the plasma membrane, cytoplasm and nucleus. The protein is WD repeat-containing protein 20 (WDR20) of Homo sapiens (Human).